The chain runs to 214 residues: NAD(P)H-quinone oxidoreductase subunit 6, chloroplastic (214 aa).

Transmembrane regions (helical) follow at residues 10-30 (FSLF…VLLP), 32-52 (ILYS…IYLL), 61-81 (AQVL…IMLV), 102-122 (IIGL…VTTP), and 163-183 (LLPF…AIVI).

The protein belongs to the complex I subunit 6 family. NDH is composed of at least 16 different subunits, 5 of which are encoded in the nucleus.

Its subcellular location is the plastid. It is found in the chloroplast thylakoid membrane. It catalyses the reaction a plastoquinone + NADH + (n+1) H(+)(in) = a plastoquinol + NAD(+) + n H(+)(out). It carries out the reaction a plastoquinone + NADPH + (n+1) H(+)(in) = a plastoquinol + NADP(+) + n H(+)(out). Its function is as follows. NDH shuttles electrons from NAD(P)H:plastoquinone, via FMN and iron-sulfur (Fe-S) centers, to quinones in the photosynthetic chain and possibly in a chloroplast respiratory chain. The immediate electron acceptor for the enzyme in this species is believed to be plastoquinone. Couples the redox reaction to proton translocation, and thus conserves the redox energy in a proton gradient. The sequence is that of NAD(P)H-quinone oxidoreductase subunit 6, chloroplastic (ndhG) from Chlorokybus atmophyticus (Soil alga).